We begin with the raw amino-acid sequence, 198 residues long: Transcriptional regulator GfcR (198 aa).

This sequence belongs to the purine/pyrimidine phosphoribosyltransferase family. GfcR subfamily.

The polypeptide is Transcriptional regulator GfcR (Methanosphaera stadtmanae (strain ATCC 43021 / DSM 3091 / JCM 11832 / MCB-3)).